A 729-amino-acid chain; its full sequence is MLYKGDTLYLDWLEDGIAELVFDAPGSVNKLDTATVASLGQALEVLEKQHDLKGLLLRSNKAAFIVGADITEFLSLFLVPEEQLSQWLHFANSVFNRLEDLPVPTLAAVNGYALGGGCECVLATDYRLATPDLRIGLPETKLGIMPGFGGSVRLPRMLGADSALEIIAAGKDVGAEHALKIGLVDGVVKQEKLIEGAIAVLRQAITGDLDWRAKRQPKLEPLKLSKIEAAMSFTIAKGMVAQTAGKHYPAPMTAVKTIEAAARFGREEALNLENKSFVPLAHTNEARALVGIFLNDQYVKGKAKKLTKDIETPKQAAVLGAGIMGGGIAYQSAWKGVPVIMKDINDKSLNLGMTEAAKLLNKQLERGKIGGLKLAGVISTIHPTLDYAGFDRVDVVVEAVVENPKVKKAVLAETEQKVRPETVLASNTSTIPIGELASALERPENFCGMHFFNPVHRMPLVEIIRGEKSSDETIAKVVAWASKMGKTPIVVNDCPGFFVNRVLFPYFAGFSQLLRDGADFRKVDKVMEKQFGWPMGPAYLLDVVGIDTAHHAQAVMAAGFPQRMQKEYRDAIDALFDASRFGQKNGLGFWRYKEDSKGKPKKEEDAAVDDLLASVSQPKRDFSDDEIIARMMIPMINEVVRCLEEGIIASPAEADMALVYGLGFPPFHGGAFRWLDTQGSAKYLDMAQQYQHLGPLYEVPEGLRDKARHNEPYYPPVEPARPVGSLKTA.

An enoyl-CoA hydratase/isomerase region spans residues M1–K189. Substrate is bound at residue D296. Positions E311 to A729 are 3-hydroxyacyl-CoA dehydrogenase. Residues M324, D343, V400–E402, K407, and S429 each bind NAD(+). H450 (for 3-hydroxyacyl-CoA dehydrogenase activity) is an active-site residue. Residue N453 coordinates NAD(+). Substrate contacts are provided by N500 and Y660. The tract at residues R708 to A729 is disordered.

It in the N-terminal section; belongs to the enoyl-CoA hydratase/isomerase family. This sequence in the C-terminal section; belongs to the 3-hydroxyacyl-CoA dehydrogenase family. As to quaternary structure, heterotetramer of two alpha chains (FadB) and two beta chains (FadA).

It catalyses the reaction a (3S)-3-hydroxyacyl-CoA + NAD(+) = a 3-oxoacyl-CoA + NADH + H(+). It carries out the reaction a (3S)-3-hydroxyacyl-CoA = a (2E)-enoyl-CoA + H2O. The catalysed reaction is a 4-saturated-(3S)-3-hydroxyacyl-CoA = a (3E)-enoyl-CoA + H2O. The enzyme catalyses (3S)-3-hydroxybutanoyl-CoA = (3R)-3-hydroxybutanoyl-CoA. It catalyses the reaction a (3Z)-enoyl-CoA = a 4-saturated (2E)-enoyl-CoA. It carries out the reaction a (3E)-enoyl-CoA = a 4-saturated (2E)-enoyl-CoA. It participates in lipid metabolism; fatty acid beta-oxidation. In terms of biological role, involved in the aerobic and anaerobic degradation of long-chain fatty acids via beta-oxidation cycle. Catalyzes the formation of 3-oxoacyl-CoA from enoyl-CoA via L-3-hydroxyacyl-CoA. It can also use D-3-hydroxyacyl-CoA and cis-3-enoyl-CoA as substrate. The polypeptide is Fatty acid oxidation complex subunit alpha (Salmonella agona (strain SL483)).